The sequence spans 141 residues: Galactose-6-phosphate isomerase subunit LacA (141 aa).

It belongs to the LacAB/RpiB family. In terms of assembly, heteromultimeric protein consisting of LacA and LacB.

The enzyme catalyses aldehydo-D-galactose 6-phosphate = keto-D-tagatose 6-phosphate. It functions in the pathway carbohydrate metabolism; D-galactose 6-phosphate degradation; D-tagatose 6-phosphate from D-galactose 6-phosphate: step 1/1. The polypeptide is Galactose-6-phosphate isomerase subunit LacA (Streptococcus pneumoniae (strain Taiwan19F-14)).